The sequence spans 404 residues: MREVPQVLGIVLAGGEGKRLYPLTADRAKPAVPFGGAYRLVDFVLSNLVNARYLRICVLTQYKSHSLDRHISQNWRLSGLAGEYITPVPAQQRFGPHWYTGSADAIYQSLNLIYDEDPDYLVVFGADHVYRMDPEQMLRFHIGSGAGATVAGIRVPRSDATAFGCIDADDSGRIRRFTEKPLKPPGTPDDPDKTFVSMGNYIFTTKVLVDAIRADADDDHSYHDMGGDILPRLVDGGMAAVYDFSQNEVPGATDWDRAYWRDVGTLDAFYDAHMDLVSLRPVFNLYNKRWPIRGESENLAPAKFVNGGSVQESVVGAGSIISAASVRNSVLSSNVVVDNGAIVEGSVIMPGARVGRGAVIRHAILDKNVVVGPGEMVGVDPERDREHFAISAGGVVVVGKGVWI.

Alpha-D-glucose 1-phosphate contacts are provided by residues tyrosine 99, glycine 164, glutamate 179–lysine 180, and serine 197.

Belongs to the bacterial/plant glucose-1-phosphate adenylyltransferase family.

It catalyses the reaction alpha-D-glucose 1-phosphate + ATP + H(+) = ADP-alpha-D-glucose + diphosphate. Its pathway is capsule biogenesis; capsule polysaccharide biosynthesis. It functions in the pathway glycan biosynthesis; glycogen biosynthesis. Functionally, involved in the biosynthesis of ADP-glucose, a building block, required in the biosynthesis of maltose-1-phosphate (M1P) and in the elongation reactions to produce linear alpha-1,4-glucans. Catalyzes the reaction between ATP and alpha-D-glucose 1-phosphate (G1P) to produce pyrophosphate and ADP-Glc. In Mycobacterium leprae (strain Br4923), this protein is Glucose-1-phosphate adenylyltransferase.